Consider the following 692-residue polypeptide: Bifunctional uridylyltransferase/uridylyl-removing enzyme (692 aa).

A uridylyltransferase region spans residues 1 to 270; the sequence is MNNPAQLRQD…FAFRNASRRP (270 aa). Residues 271 to 692 form a uridylyl-removing region; sequence LDLDVVDANG…RSVVRSLAGS (422 aa). In terms of domain architecture, HD spans 383–484; sequence IDEHSLNTVA…DKLLDAVRYD (102 aa).

It belongs to the GlnD family. Mg(2+) serves as cofactor.

The enzyme catalyses [protein-PII]-L-tyrosine + UTP = [protein-PII]-uridylyl-L-tyrosine + diphosphate. It carries out the reaction [protein-PII]-uridylyl-L-tyrosine + H2O = [protein-PII]-L-tyrosine + UMP + H(+). With respect to regulation, uridylyltransferase (UTase) activity is inhibited by glutamine, while glutamine activates uridylyl-removing (UR) activity. Functionally, modifies, by uridylylation and deuridylylation, the PII regulatory proteins (GlnB and homologs), in response to the nitrogen status of the cell that GlnD senses through the glutamine level. Under low glutamine levels, catalyzes the conversion of the PII proteins and UTP to PII-UMP and PPi, while under higher glutamine levels, GlnD hydrolyzes PII-UMP to PII and UMP (deuridylylation). Thus, controls uridylylation state and activity of the PII proteins, and plays an important role in the regulation of nitrogen assimilation and metabolism. In Corynebacterium glutamicum (strain ATCC 13032 / DSM 20300 / JCM 1318 / BCRC 11384 / CCUG 27702 / LMG 3730 / NBRC 12168 / NCIMB 10025 / NRRL B-2784 / 534), this protein is Bifunctional uridylyltransferase/uridylyl-removing enzyme (glnD).